A 246-amino-acid chain; its full sequence is Probable transcriptional regulatory protein COSY_0365 (246 aa).

The protein belongs to the TACO1 family.

It is found in the cytoplasm. The protein is Probable transcriptional regulatory protein COSY_0365 of Vesicomyosocius okutanii subsp. Calyptogena okutanii (strain HA).